Here is a 297-residue protein sequence, read N- to C-terminus: Acetylglutamate kinase (297 aa).

Substrate-binding positions include 72–73, Arg-94, and Asn-187; that span reads GG.

It belongs to the acetylglutamate kinase family. ArgB subfamily.

It localises to the cytoplasm. The catalysed reaction is N-acetyl-L-glutamate + ATP = N-acetyl-L-glutamyl 5-phosphate + ADP. It participates in amino-acid biosynthesis; L-arginine biosynthesis; N(2)-acetyl-L-ornithine from L-glutamate: step 2/4. Catalyzes the ATP-dependent phosphorylation of N-acetyl-L-glutamate. The chain is Acetylglutamate kinase from Synechocystis sp. (strain ATCC 27184 / PCC 6803 / Kazusa).